The following is a 616-amino-acid chain: Glycogenin-1 (616 aa).

Positions 10, 16, and 95 each coordinate UDP. Residues Leu10, Tyr16, Arg95, Lys104, Asp120, Asp122, Asn158, Ser159, Asp185, Asp188, and Gln189 each contribute to the UDP-alpha-D-glucose site. The UDP site is built by Asp120 and Asp122. Mn(2+) is bound by residues Asp120 and Asp122. A glycan (O-linked (Glc...) tyrosine) is linked at Tyr230. The UDP site is built by His247, Gly250, and Lys253. Residue His247 participates in Mn(2+) binding. The UDP-alpha-D-glucose site is built by Gly250 and Lys253. The span at 283 to 302 (HQLNNEVSKPKISDSDKTET) shows a compositional bias: basic and acidic residues. Disordered stretches follow at residues 283 to 320 (HQLN…PTTN), 335 to 354 (NQNA…NPVP), 371 to 525 (TNQP…EKDK), and 553 to 588 (RDAT…EMPN). Residues 377–386 (ESREYSKEND) are compositionally biased toward basic and acidic residues. The segment covering 400–419 (SPPNSTQELNSSYSVVSTQA) has biased composition (polar residues). A compositionally biased stretch (low complexity) spans 450 to 461 (STAASSNNNVSN). 2 stretches are compositionally biased toward polar residues: residues 462–485 (QPDG…PSNP) and 492–503 (DNIQKPSVSTND). Over residues 567–576 (DKQEDMKLTA) the composition is skewed to basic and acidic residues. Polar residues predominate over residues 577-586 (EETNQPQQEM). Tyr598 carries O-linked (Glc...) tyrosine glycosylation.

It belongs to the glycosyltransferase 8 family. Glycogenin subfamily. Mn(2+) serves as cofactor.

The protein localises to the cytoplasm. Its subcellular location is the vacuole. The catalysed reaction is L-tyrosyl-[glycogenin] + UDP-alpha-D-glucose = alpha-D-glucosyl-L-tyrosyl-[glycogenin] + UDP + H(+). It catalyses the reaction [1,4-alpha-D-glucosyl](n)-L-tyrosyl-[glycogenin] + UDP-alpha-D-glucose = [1,4-alpha-D-glucosyl](n+1)-L-tyrosyl-[glycogenin] + UDP + H(+). Its function is as follows. Self-glucosylating initiator of glycogen synthesis. It catalyzes the formation of a short alpha (1,4)-glucosyl chain covalently attached via a glucose 1-O-tyrosyl linkage to internal tyrosine residues and these chains act as primers for the elongation reaction catalyzed by glycogen synthase. Capable of transferring glucosyl residues to unbound acceptors such as free oligoglucans or oligoglucan derivatives. This chain is Glycogenin-1, found in Saccharomyces cerevisiae (strain ATCC 204508 / S288c) (Baker's yeast).